An 821-amino-acid chain; its full sequence is Ent-pimara-8(14),15-diene synthase (821 aa).

Residues D556, D560, N701, T705, and E709 each coordinate Mg(2+). The DDXXD motif motif lies at D556 to D560.

The protein belongs to the terpene synthase family. The cofactor is Mg(2+). In terms of tissue distribution, highly expressed in roots, at intermediate levels in stems and at lower levels in leaves.

It carries out the reaction ent-copalyl diphosphate = ent-pimara-8(14),15-diene + diphosphate. It participates in secondary metabolite biosynthesis; terpenoid biosynthesis. Involved in the biosynthesis of ent-kaurene diterpenoids natural products. Catalyzes the conversion of ent-copalyl diphosphate to ent-pimara-8(14),15-diene. This Oryza sativa subsp. japonica (Rice) protein is Ent-pimara-8(14),15-diene synthase.